A 581-amino-acid polypeptide reads, in one-letter code: Chaotic nuclear migration protein 67 (581 aa).

Phosphoserine is present on residues Ser-17, Ser-20, Ser-72, Ser-85, and Ser-89. The disordered stretch occupies residues 86–150; that stretch reads YQESPGLQER…PTDEHTSPDI (65 aa). The segment covering 94–114 has biased composition (basic and acidic residues); that stretch reads ERPKNEKDKSPIGTDVHKKDV. Ser-151 is modified (phosphoserine). Coiled coils occupy residues 179–252, 306–363, and 373–451; these read LGYQ…DTIQ, FLCA…LSKQ, and KLTI…NTSE.

In terms of assembly, interacts directly with ADY3 and YOR129C. Interacts with ADY4. Probable component of a SPB complex composed of ADY3, SSP1, DON1, MPC54, SPO21/MPC70, NUD1 and CNM67. In terms of processing, phosphorylated in its N-terminal part.

The protein localises to the cytoplasm. The protein resides in the cytoskeleton. It localises to the microtubule organizing center. It is found in the spindle pole body. Functionally, involved in the pathway that organizes the shaping and sizing of the prospore membrane (PSM) during sporulation. Required for the proper formation of the spindle pole body (SPB) outer plaque. May connect the outer plaque to the central plaque embedded in the nuclear envelope. The chain is Chaotic nuclear migration protein 67 (CNM67) from Saccharomyces cerevisiae (strain ATCC 204508 / S288c) (Baker's yeast).